Here is a 418-residue protein sequence, read N- to C-terminus: AA11 family lytic polysaccharide monooxygenase B (418 aa).

The first 21 residues, 1-21, serve as a signal peptide directing secretion; the sequence is MMFSKSGLVAVAMLGASAVEA. 2 residues coordinate Cu(+): His22 and His82. 3 disulfide bridges follow: Cys50-Cys165, Cys87-Cys113, and Cys206-Cys240. Asn120 and Asn134 each carry an N-linked (GlcNAc...) asparagine glycan. Residues 226-345 are disordered; the sequence is DGNPSNLQPA…SSSSSNGALT (120 aa). The segment covering 254 to 345 has biased composition (low complexity); it reads SPSTPSTSSS…SSSSSNGALT (92 aa).

It belongs to the polysaccharide monooxygenase AA11 family. It depends on Cu(2+) as a cofactor.

It localises to the secreted. Lytic polysaccharide monooxygenase (LPMO)-like protein that acts as a strict peroxygenase and does not catalyze a monooxygenase reaction. It is indeed hardly active on chitin, while being very active on soluble oligomers of N-acetylglucosamine. Cleaves the glycosidic bonds byoxidizing the C1 position. Also unable to oxidize cellopentaose. Probably breaks glycosidic bonds in non-polymeric substrates possibly carbohydrates in the cell wall of the fungus or its competitors. In the presence of chitotetraose, the enzyme can withstand considerable amounts of H(2)O(2), which it uses to efficiently and stoichiometrically convert this substrate. This Aspergillus fumigatus (strain ATCC MYA-4609 / CBS 101355 / FGSC A1100 / Af293) (Neosartorya fumigata) protein is AA11 family lytic polysaccharide monooxygenase B.